The chain runs to 230 residues: 7-cyano-7-deazaguanine synthase (230 aa).

16-26 (LSGGLDSATVV) provides a ligand contact to ATP. Zn(2+) contacts are provided by Cys195, Cys205, Cys208, and Cys211.

Belongs to the QueC family. Zn(2+) is required as a cofactor.

It carries out the reaction 7-carboxy-7-deazaguanine + NH4(+) + ATP = 7-cyano-7-deazaguanine + ADP + phosphate + H2O + H(+). The protein operates within purine metabolism; 7-cyano-7-deazaguanine biosynthesis. Catalyzes the ATP-dependent conversion of 7-carboxy-7-deazaguanine (CDG) to 7-cyano-7-deazaguanine (preQ(0)). The protein is 7-cyano-7-deazaguanine synthase of Pseudomonas fluorescens (strain Pf0-1).